The chain runs to 513 residues: TRAF3-interacting JNK-activating modulator (513 aa).

3 disordered regions span residues 1-96, 130-171, and 381-402; these read MISS…GQVS, SSGI…KAEE, and SLQG…QLKK. The Cytoplasmic portion of the chain corresponds to 1–485; the sequence is MISSDSRSSP…QLQVKENELQ (485 aa). 2 stretches are compositionally biased toward basic and acidic residues: residues 17–31 and 69–79; these read ESYE…ETRE and RNLEEEKKGQA. Residues 266–488 adopt a coiled-coil conformation; the sequence is MKKVLLEMED…VKENELQCGQ (223 aa). Over residues 386 to 397 the composition is skewed to polar residues; the sequence is GEQQSSETQDLQ. Residues 486–506 form a helical; Anchor for type IV membrane protein membrane-spanning segment; it reads CGQWLPVLMVVIATALAVFLA. Residues 507–513 are Extracellular-facing; it reads NKGNLVI.

In terms of assembly, interacts (via its coiled-coil domain) with TRAF3 (via isoleucine zipper). Interacts with MAP2K1. Interacts with PPP2CA; this interaction targets PPP2CA to the lysosomes. Interacts with MAVS. Interacts with TBK1. Expressed in bone marrow, spleen and thymus. Not detected in heart, kidney and liver.

It localises to the cell membrane. It is found in the golgi apparatus membrane. The protein resides in the lysosome membrane. The protein localises to the mitochondrion outer membrane. Adapter protein that plays essential roles in both innate and adaptive immunity. Plays a crucial role in the regulation of thymocyte development. Mechanistically, mediates TCR-stimulated activation through recruiting MAP2K1/MEK1 to the Golgi and, thereby, facilitating the interaction of MAP2K1/MEK1 with its activator BRAF. Also plays an essential role in regulatory T-cell stability and function by recruiting the serine-threonine phosphatase catalytic subunit (PPP2CA) to the lysosome, thereby facilitating the interaction of PP2Ac with the mTORC1 component RPTOR and restricting glycolytic metabolism. Positively regulates TLR4 signaling activity in macrophage-mediated inflammation by acting as a molecular clamp to facilitate LPS-induced translocation of TLR4 to lipid rafts. In response to viral infection, facilitates the recruitment of TRAF3 to MAVS within mitochondria leading to IRF3 activation and interferon production. However, participates in the maintenance of immune homeostasis and the prevention of overzealous innate immunity by promoting 'Lys-48'-dependent ubiquitination of TBK1. This is TRAF3-interacting JNK-activating modulator (Traf3ip3) from Mus musculus (Mouse).